A 1133-amino-acid polypeptide reads, in one-letter code: MDENSELGGLETMETLTELGDELTLGDIDEMLQFVSNQVGEFSDLFSEQLCSSFPGGGGGSGSGGTSNNSSGRGTSGGAADPAVQRSFSQVPLSTFSPSSTSPQAPALQVKVSPTPPRATPVLQPRPQPQPQPPAQLQQQTVMITPTFSTAPQTRIIQQPLIYQNAATSFQVLQPQVQSLVTSSQVQPVTIQQQVQTVQAQRVLTQTANGTLQTLAPATVQTVATPQVQQVPVLVQPQIIKTDSLVLTTLKTDGSPVMAAVQNPALTALTAPIQTAALQVPTLVGSNGAILTTMPVMMGQEKVPIKQVPGGVKQLEPPKEGERRTTHNIIEKRYRSSINDKIIELKDLVMGTDAKMHKSGVLRKAIDYIKYLQQVNHKLRQENMVLKLANQKNKLLKGIDLGSLVDSDVDLKIDDFNQNVLLMSPPASDSGSQAGFSPYSIDSEPGSPLLDDAKVKDEPDSPPVALGMVDRSRILLCVLTFLGLSFNPLTSLLQWGGAHNPDQHPYSGSGRNVLSLESGSGGWFDWMMPTLLLWLLNGVIVLSVFVKLLVHGEPVIRPHSRSSVTFWRHRKQADLDLAKGDFAAAAANLQTCLSVLGRALPTSRLDLACSLSWNVIRYSLQKLRLVRWLLKKVFQRWRATPATAAGFEDEAKSSARDAALAYHRLHQLHITGKLPAGSACSDVHMALCAVNLAECAEEKIPPSTLVEIHLTAAMGLKTRCGGKLGFLASYFLNRAQSLCGPEHSAVPDSLRWLCHPLGQKFFMERSWSIKSAAKDSLYCAQRNPADPIAQVHQAFCKHLLERAVEALVKPQAKKKAGDREEESCEFSSALEFLKLLHSFVDSVGFVASPFSSSSVLRSALGPDVVCRWWTSAITVAISWLQGDDAAVRSHFTEVERVPKALEVTESPLVKAVFYACRAMHASLSGKADGQQNSFCHCERASGHLWSSLNVSGTTSDPSLNHVVQLLTCDLLLSLRTTLWQKQASASQLLGETYHASGTELAGFQRDLGSLRRLAHSFRPAYRKVFLHEATVRLMAGASPTRTHQLLEHSLRRRTTQNTKHGEVDTWPGQRERATAILLACRHLPLSFLSSPGQRAVLLAEAARTLEKVGDRRSCSDCQQMIVKLGGGTAIAAS.

A transcriptional activation (acidic) region spans residues methionine 1 to leucine 50. Topologically, residues methionine 1 to arginine 473 are cytoplasmic. The segment covering glycine 56–glycine 65 has biased composition (gly residues). Residues glycine 56–glutamine 136 form a disordered region. Low complexity predominate over residues proline 92–glutamine 109. Positions proline 114–proline 134 are enriched in pro residues. The tract at residues glutamine 229 to glycine 483 is interaction with LMNA. Positions glutamate 322–leucine 372 constitute a bHLH domain. The tract at residues leucine 372–asparagine 393 is leucine-zipper. Lysine 456 participates in a covalent cross-link: Glycyl lysine isopeptide (Lys-Gly) (interchain with G-Cter in SUMO2). Residues isoleucine 474 to glutamine 494 form a helical membrane-spanning segment. The Lumenal portion of the chain corresponds to tryptophan 495 to aspartate 525. The helical transmembrane segment at tryptophan 526–valine 546 threads the bilayer. Topologically, residues lysine 547 to serine 1133 are cytoplasmic. A Phosphoserine modification is found at serine 1090.

Belongs to the SREBP family. Homodimer; efficient DNA binding of the soluble transcription factor fragment requires dimerization with another bHLH protein. Interacts with LMNA. In terms of assembly, forms a tight complex with SCAP, the SCAP-SREBP complex, in the endoplasmic reticulum membrane and the Golgi apparatus. Interacts with PAQR3; the interaction anchors the SCAP-SREBP complex to the Golgi apparatus in low cholesterol conditions. Interacts (via C-terminal domain) with RNF139. Processed in the Golgi apparatus, releasing the protein from the membrane. At low cholesterol the SCAP-SREBP complex is recruited into COPII vesicles for export from the endoplasmic reticulum. In the Golgi, complex SREBPs are cleaved sequentially by site-1 (MBTPS1, S1P) and site-2 (MBTPS2, S2P) proteases. The first cleavage by site-1 protease occurs within the luminal loop, the second cleavage by site-2 protease occurs within the first transmembrane domain, releasing the transcription factor from the Golgi membrane. Apoptosis triggers cleavage by the cysteine proteases caspase-3 and caspase-7. Cleavage and activation is induced by mediated cholesterol efflux. Post-translationally, phosphorylated by AMPK, leading to suppress protein processing and nuclear translocation, and repress target gene expression. In terms of processing, SCAP-free SREBF2 is ubiquitinated by the BCR(ARMC5) complex, leading to its degradation. Ubiquitinated; the nuclear form has a rapid turnover and is rapidly ubiquitinated and degraded by the proteasome in the nucleus.

It localises to the endoplasmic reticulum membrane. The protein localises to the golgi apparatus membrane. Its subcellular location is the cytoplasmic vesicle. The protein resides in the COPII-coated vesicle membrane. It is found in the nucleus. With respect to regulation, activation by cleavage is down-regulated upon activation of SIRT3-dependent PRKAA1/AMPK-alpha signaling cascade which leads to inhibition of ATP-consuming lipogenesis to restore cellular energy balance. In terms of biological role, precursor of the transcription factor form (Processed sterol regulatory element-binding protein 2), which is embedded in the endoplasmic reticulum membrane. Low sterol concentrations promote processing of this form, releasing the transcription factor form that translocates into the nucleus and activates transcription of genes involved in cholesterol biosynthesis. Functionally, key transcription factor that regulates expression of genes involved in cholesterol biosynthesis. Binds to the sterol regulatory element 1 (SRE-1) (5'-ATCACCCCAC-3'). Has dual sequence specificity binding to both an E-box motif (5'-ATCACGTGA-3') and to SRE-1 (5'-ATCACCCCAC-3'). Regulates transcription of genes related to cholesterol synthesis pathway. Regulates hepatic lipogenesis. In Rattus norvegicus (Rat), this protein is Sterol regulatory element-binding protein 2.